Here is a 330-residue protein sequence, read N- to C-terminus: GMP reductase (330 aa).

The active-site Thioimidate intermediate is the Cys180. 209–232 provides a ligand contact to NADP(+); that stretch reads LIADGGIRHNGDIAKSVRFGASMV.

The protein belongs to the IMPDH/GMPR family. GuaC type 2 subfamily.

It carries out the reaction IMP + NH4(+) + NADP(+) = GMP + NADPH + 2 H(+). Functionally, catalyzes the irreversible NADPH-dependent deamination of GMP to IMP. It functions in the conversion of nucleobase, nucleoside and nucleotide derivatives of G to A nucleotides, and in maintaining the intracellular balance of A and G nucleotides. This is GMP reductase from Lactobacillus johnsonii (strain CNCM I-12250 / La1 / NCC 533).